Here is a 188-residue protein sequence, read N- to C-terminus: Inner membrane-spanning protein YciB (188 aa).

The next 5 membrane-spanning stretches (helical) occupy residues Ile-22 to Met-42, Met-50 to Asn-70, Leu-72 to Ser-92, Phe-121 to Leu-141, and Phe-149 to Ile-169.

It belongs to the YciB family.

It localises to the cell inner membrane. Plays a role in cell envelope biogenesis, maintenance of cell envelope integrity and membrane homeostasis. The sequence is that of Inner membrane-spanning protein YciB from Pectobacterium carotovorum subsp. carotovorum (strain PC1).